We begin with the raw amino-acid sequence, 319 residues long: Dehydrogenase/reductase SDR family member 9 (319 aa).

The first 17 residues, 1–17 (MLFWLLVLLILCGFLWN), serve as a signal peptide directing secretion. Residues 34–58 (ITGC…HVIA) and aspartate 83 contribute to the NAD(+) site. Serine 164 is a substrate binding site. Tyrosine 176 serves as the catalytic Proton acceptor. Position 180 (lysine 180) interacts with NAD(+).

Belongs to the short-chain dehydrogenases/reductases (SDR) family. As to quaternary structure, homotetramer.

Its subcellular location is the microsome membrane. It is found in the endoplasmic reticulum membrane. The catalysed reaction is 3beta-hydroxy-5alpha-pregnane-20-one + NAD(+) = 5alpha-pregnane-3,20-dione + NADH + H(+). It carries out the reaction 17beta-hydroxy-5alpha-androstan-3-one + NAD(+) = 5alpha-androstan-3,17-dione + NADH + H(+). The enzyme catalyses androsterone + NAD(+) = 5alpha-androstan-3,17-dione + NADH + H(+). It catalyses the reaction 5alpha-androstane-3alpha,17beta-diol + NAD(+) = 17beta-hydroxy-5alpha-androstan-3-one + NADH + H(+). The catalysed reaction is all-trans-retinol + NAD(+) = all-trans-retinal + NADH + H(+). It carries out the reaction 3alpha-hydroxy-5alpha-pregnan-20-one + NAD(+) = 5alpha-pregnane-3,20-dione + NADH + H(+). Its function is as follows. 3-alpha-hydroxysteroid dehydrogenase that converts 3-alpha-tetrahydroprogesterone (allopregnanolone) to dihydroxyprogesterone and 3-alpha-androstanediol to dihydroxyprogesterone. Also plays a role in the biosynthesis of retinoic acid from retinaldehyde. Can utilize both NADH and NADPH. The protein is Dehydrogenase/reductase SDR family member 9 (DHRS9) of Bos taurus (Bovine).